The following is a 334-amino-acid chain: tRNA-dihydrouridine synthase B (334 aa).

FMN is bound by residues 16–18 (PMA) and Q70. The active-site Proton donor is C100. FMN-binding positions include K139, 200–202 (NGD), and 224–225 (GR).

This sequence belongs to the Dus family. DusB subfamily. It depends on FMN as a cofactor.

It carries out the reaction a 5,6-dihydrouridine in tRNA + NAD(+) = a uridine in tRNA + NADH + H(+). The catalysed reaction is a 5,6-dihydrouridine in tRNA + NADP(+) = a uridine in tRNA + NADPH + H(+). Its function is as follows. Catalyzes the synthesis of 5,6-dihydrouridine (D), a modified base found in the D-loop of most tRNAs, via the reduction of the C5-C6 double bond in target uridines. The protein is tRNA-dihydrouridine synthase B of Serratia marcescens.